The sequence spans 522 residues: Cytochrome bd-I ubiquinol oxidase subunit 1 (522 aa).

The residue at position 1 (methionine 1) is an N-formylmethionine. Residues 1 to 22 (MLDIVELSRLQFALTAMYHFLF) are Cytoplasmic-facing. Histidine 19 contributes to the heme b binding site. The chain crosses the membrane as a helical span at residues 23–42 (VPLTLGMAFLLAIMETVYVL). The Periplasmic segment spans residues 43-94 (SGKQIYKDMTKFWGKLFGINFALGVATGLTMEFQFGTNWSYYSHYVGDIFGA). The chain crosses the membrane as a helical span at residues 95-114 (PLAIEGLMAFFLESTFVGLF). The Cytoplasmic segment spans residues 115–129 (FFGWDRLGKVQHMCV). Residues 130–149 (TWLVALGSNLSALWILVANG) form a helical membrane-spanning segment. At 150 to 187 (WMQNPIASDFNFETMRMEMVSFSELVLNPVAQVKFVHT) the chain is on the periplasmic side. Position 186 (histidine 186) interacts with heme b. Residues 188–207 (VASGYVTGAMFILGISAWYM) form a helical membrane-spanning segment. At 208 to 219 (LKGRDFAFAKRS) the chain is on the cytoplasmic side. The chain crosses the membrane as a helical span at residues 220–239 (FAIAASFGMAAVLSVIVLGD). The Periplasmic segment spans residues 240-392 (ESGYEMGDVQ…VAPLYFAFRI (153 aa)). Position 393 (methionine 393) interacts with heme b. A helical membrane pass occupies residues 393–412 (MVACGFLLLAIIALSFWSVI). The Cytoplasmic segment spans residues 413–470 (RNRIGEKKWLLRAALYGIPLPWIAVEAGWFVAEYGRQPWAIGEVLPTAVANSSLTAGD). The chain crosses the membrane as a helical span at residues 471 to 490 (LIFSMVLICGLYTLFLVAEL). Over 491 to 522 (FLMFKFARLGPSSLKTGRYHFEQSSTTTQPAR) the chain is Periplasmic.

It belongs to the cytochrome ubiquinol oxidase subunit 1 family. Heterodimer of subunits I and II. Heme b serves as cofactor. The cofactor is heme d cis-diol.

Its subcellular location is the cell inner membrane. The catalysed reaction is 2 a ubiquinol + O2(in) + 4 H(+)(in) = 2 a ubiquinone + 2 H2O(in) + 4 H(+)(out). It participates in energy metabolism; oxidative phosphorylation. Its function is as follows. A terminal oxidase that produces a proton motive force by the vectorial transfer of protons across the inner membrane. It is the component of the aerobic respiratory chain of E.coli that predominates when cells are grown at low aeration. Generates a proton motive force using protons and electrons from opposite sides of the membrane to generate H(2)O, transferring 1 proton/electron. In Escherichia coli O6:H1 (strain CFT073 / ATCC 700928 / UPEC), this protein is Cytochrome bd-I ubiquinol oxidase subunit 1 (cydA).